The following is a 210-amino-acid chain: MKGKFIVIEGLEGAGKSSAHQSVVRVLHELGIQDVVFTREPGGTPLAEKLRHLIKHETEEPVTDKAELLMLYAARIQLVENVIKPALMQGKWVVGDRHDMSSQAYQGGGRQLDPHFMLTLKETVLGNFEPDLTIYLDIDPSVGLARARGRGELDRIEQMDLDFFHRTRARYLELVKDNPKAVVINAEQSIELVQADIESAVKNWWKSNEK.

10–17 (GLEGAGKS) contacts ATP.

The protein belongs to the thymidylate kinase family.

It carries out the reaction dTMP + ATP = dTDP + ADP. Functionally, phosphorylation of dTMP to form dTDP in both de novo and salvage pathways of dTTP synthesis. The protein is Thymidylate kinase (tmk) of Haemophilus influenzae (strain ATCC 51907 / DSM 11121 / KW20 / Rd).